The following is a 290-amino-acid chain: Ribosomal RNA small subunit methyltransferase A (290 aa).

Asn27, Leu29, Gly54, Glu75, Asp100, and Asn125 together coordinate S-adenosyl-L-methionine.

Belongs to the class I-like SAM-binding methyltransferase superfamily. rRNA adenine N(6)-methyltransferase family. RsmA subfamily.

The protein resides in the cytoplasm. The catalysed reaction is adenosine(1518)/adenosine(1519) in 16S rRNA + 4 S-adenosyl-L-methionine = N(6)-dimethyladenosine(1518)/N(6)-dimethyladenosine(1519) in 16S rRNA + 4 S-adenosyl-L-homocysteine + 4 H(+). Specifically dimethylates two adjacent adenosines (A1518 and A1519) in the loop of a conserved hairpin near the 3'-end of 16S rRNA in the 30S particle. May play a critical role in biogenesis of 30S subunits. This is Ribosomal RNA small subunit methyltransferase A from Streptococcus pyogenes serotype M5 (strain Manfredo).